We begin with the raw amino-acid sequence, 773 residues long: Leucine-rich repeat and calponin homology domain-containing protein 2 (773 aa).

The disordered stretch occupies residues 1-46; that stretch reads MAASQGGGGNSGGGGCSGGGSGGGGGAAGGGGGGGGGGGGGAGAGG. LRR repeat units follow at residues 97 to 118, 120 to 141, 143 to 164, 166 to 187, 188 to 209, 211 to 232, 234 to 256, 257 to 277, and 279 to 300; these read NSGILSLSGRKLREFPGSGYDL, DTTQADLSRNRFTEIPSDVWLF, PLETLNLYHNCIKTIPEAIKNL, MLTYLNISRNLLSTLPKYLFDL, PLKVLVVSNNKLVSIPEEIGKL, DLMELDVSCNEIQVLPQQMGKL, SLKELNIRRNNLHVLPDELGDLP, LVKLDFSCNKVTEIPVCYRKL, and HLQVIILDNNPLQVPPAQICLK. Disordered regions lie at residues 324-409, 438-478, and 573-633; these read LDLP…QKDQ, FLKG…LKEV, and KYKS…SRQE. Basic and acidic residues-rich tracts occupy residues 386–396 and 440–466; these read SNREQTSRNDS and KGKEKSSEKSQKNEEPPNEKKVDKEQL. Positions 594 to 603 are enriched in polar residues; the sequence is AHMSAQSPVS. The Calponin-homology (CH) domain maps to 650–763; that stretch reads LREEREQIRQ…VTVQALLELP (114 aa).

Functionally, may play a role in the organization of the cytoskeleton. In Mus musculus (Mouse), this protein is Leucine-rich repeat and calponin homology domain-containing protein 2 (Lrch2).